Here is a 707-residue protein sequence, read N- to C-terminus: B-cell lymphoma 6 protein homolog (707 aa).

Positions 32–99 (TDVVIVVSRE…MYTSRLNLRE (68 aa)) constitute a BTB domain. The interval 275-350 (HYSVPEGPKP…QPNSPTESCS (76 aa)) is disordered. Over residues 299 to 315 (KASKEEERPSSEDEIAL) the composition is skewed to basic and acidic residues. Polar residues predominate over residues 331–350 (SPQSPQKSDCQPNSPTESCS). Phosphoserine is present on Ser-334. The residue at position 344 (Ser-344) is a Phosphoserine; by MAPK1. At Ser-362 the chain carries Phosphoserine. A required for interaction with NuRD complex and for transcriptional repressor activity region spans residues 377-380 (KKYK). Lys-380 is subject to N6-acetyllysine; by EP300. Phosphoserine is present on Ser-405. The interval 405 to 469 (SPRAYPAPPA…RSSSESHSPL (65 aa)) is disordered. Over residues 409–420 (YPAPPACQPPME) the composition is skewed to pro residues. Residues 425-452 (DLQSPTKLSASGEDSTIPQASRLNNLVN) are compositionally biased toward polar residues. Residues 458–467 (SPRSSSESHS) show a composition bias toward low complexity. 6 consecutive C2H2-type zinc fingers follow at residues 519 to 542 (FFCNECDCRFSEEASLKRHTLQTH), 547 to 569 (YKCDRCQASFRYKGNLASHKTVH), 575 to 597 (YRCNICGAQFNRPANLKTHTRIH), 603 to 625 (YKCETCGARFVQVAHLRAHVLIH), 631 to 653 (YPCEICGTRFRHLQTLKSHLRIH), and 659 to 682 (YHCEKCNLHFRHKSQLRLHLRQKH).

In terms of assembly, homodimer. Interacts (via BTB domain) with the corepressors BCOR, NCOR1 and SMRT/NCOR2; the interactions are direct. Forms preferably ternary complexes with BCOR and SMRT/NCOR2 on target gene promoters but, on enhancer elements, interacts with SMRT/NCOR2 and HDAC3 to repress proximal gene expression. Interacts with histone deacetylases HDAC2, HDAC5 and HDAC9 (via the catalytic domain). Interacts with ZBTB7 and BCL6B. Interacts with SCF(FBXO11) complex; the interaction is independent of phosphorylation and promotes ubiquitination. Interacts (when phosphorylated) with PIN1; the interaction is required for BCL6 degradation upon genotoxic stress. Interacts with ZBTB17; inhibits ZBTB17 transcriptional activity. Interacts with CTBP1, autoinhibits its transcriptional expression. Interacts with NOTCH1 NCID and SIRT1; leads to a epigenetic repression of selective NOTCH1-target genes. Interacts (nor via BTB domain neither acetylated) with the NuRD complex components CHD4, HDAC1, MBD3 and MTA3; the interaction with MTA3 inhibits BCL6 acetylation and is required for BCL6 transpriptional repression. Post-translationally, phosphorylated by MAPK1 in response to antigen receptor activation at Ser-334 and Ser-344. Phosphorylated by ATM in response to genotoxic stress. Phosphorylation induces its degradation by ubiquitin/proteasome pathway. Polyubiquitinated. Polyubiquitinated by SCF(FBXO11), leading to its degradation by the proteasome. Ubiquitinated by the SCF(FBXL17) complex, leading to its degradation by the proteasome: ubiquitination by the SCF(FBXL17) complex takes place when aberrant BTB domain dimers are formed. In terms of processing, acetylated at Lys-380 by EP300 which inhibits the interaction with NuRD complex and the transcriptional repressor function. Deacetylated by HDAC- and SIR2-dependent pathways. In terms of tissue distribution, expressed at least in germinal center B-cells of spleen.

The protein localises to the nucleus. Functionally, transcriptional repressor mainly required for germinal center (GC) formation and antibody affinity maturation which has different mechanisms of action specific to the lineage and biological functions. Forms complexes with different corepressors and histone deacetylases to repress the transcriptional expression of different subsets of target genes. Represses its target genes by binding directly to the DNA sequence 5'-TTCCTAGAA-3' (BCL6-binding site) or indirectly by repressing the transcriptional activity of transcription factors. In GC B-cells, represses genes that function in differentiation, inflammation, apoptosis and cell cycle control, also autoregulates its transcriptional expression and up-regulates, indirectly, the expression of some genes important for GC reactions, such as AICDA, through the repression of microRNAs expression, like miR155. An important function is to allow GC B-cells to proliferate very rapidly in response to T-cell dependent antigens and tolerate the physiological DNA breaks required for immunglobulin class switch recombination and somatic hypermutation without inducing a p53/TP53-dependent apoptotic response. In follicular helper CD4(+) T-cells (T(FH) cells), promotes the expression of T(FH)-related genes but inhibits the differentiation of T(H)1, T(H)2 and T(H)17 cells. Also required for the establishment and maintenance of immunological memory for both T- and B-cells. Suppresses macrophage proliferation through competition with STAT5 for STAT-binding motifs binding on certain target genes, such as CCL2 and CCND2. In response to genotoxic stress, controls cell cycle arrest in GC B-cells in both p53/TP53-dependedent and -independent manners. Besides, also controls neurogenesis through the alteration of the composition of NOTCH-dependent transcriptional complexes at selective NOTCH targets, such as HES5, including the recruitment of the deacetylase SIRT1 and resulting in an epigenetic silencing leading to neuronal differentiation. The protein is B-cell lymphoma 6 protein homolog (Bcl6) of Mus musculus (Mouse).